The chain runs to 446 residues: Glutamine synthetase (446 aa).

In terms of domain architecture, GS beta-grasp spans 18–103 (ENVRYLRLQF…LICDVYKTDG (86 aa)). The GS catalytic domain occupies 110–446 (PRANLKRVLK…WERDQYMKQY (337 aa)). Residues Glu134 and Glu136 each coordinate Mg(2+). Residue Glu186 coordinates ATP. Mg(2+)-binding residues include Glu191 and Glu198. L-glutamate contacts are provided by residues 242 to 243 (NG) and Gly243. His247 provides a ligand contact to Mg(2+). ATP is bound at residue Ser251. The L-glutamate site is built by Arg300, Glu306, and Arg318. 2 residues coordinate ATP: Arg318 and Arg323. Glu335 contributes to the Mg(2+) binding site. Arg337 serves as a coordination point for L-glutamate.

It belongs to the glutamine synthetase family. In terms of assembly, oligomer of 12 subunits arranged in the form of two hexagons. In its feedback-inhibited form, interacts with TnrA in order to block its DNA-binding activity. Mg(2+) serves as cofactor.

Its subcellular location is the cytoplasm. The enzyme catalyses L-glutamate + NH4(+) + ATP = L-glutamine + ADP + phosphate + H(+). With respect to regulation, inhibited by glutamine. In terms of biological role, glutamine synthetase (GS) is an unusual multitasking protein that functions as an enzyme, a transcription coregulator, and a chaperone in ammonium assimilation and in the regulation of genes involved in nitrogen metabolism. It catalyzes the ATP-dependent biosynthesis of glutamine from glutamate and ammonia. Feedback-inhibited GlnA also interacts with and regulates the activity of the transcriptional regulator TnrA. During nitrogen limitation, TnrA is in its DNA-binding active state and turns on the transcription of genes required for nitrogen assimilation. Under conditions of nitrogen excess, feedback-inhibited GlnA forms a stable complex with TnrA, which inhibits its DNA-binding activity. In contrast, feedback-inhibited GlnA acts as a chaperone to stabilize the DNA-binding activity of GlnR, which represses the transcription of nitrogen assimilation genes. The protein is Glutamine synthetase of Staphylococcus aureus (strain N315).